We begin with the raw amino-acid sequence, 145 residues long: D-aminoacyl-tRNA deacylase (145 aa).

Positions 137–138 match the Gly-cisPro motif, important for rejection of L-amino acids motif; the sequence is GP.

It belongs to the DTD family. In terms of assembly, homodimer.

The protein localises to the cytoplasm. The catalysed reaction is glycyl-tRNA(Ala) + H2O = tRNA(Ala) + glycine + H(+). It carries out the reaction a D-aminoacyl-tRNA + H2O = a tRNA + a D-alpha-amino acid + H(+). In terms of biological role, an aminoacyl-tRNA editing enzyme that deacylates mischarged D-aminoacyl-tRNAs. Also deacylates mischarged glycyl-tRNA(Ala), protecting cells against glycine mischarging by AlaRS. Acts via tRNA-based rather than protein-based catalysis; rejects L-amino acids rather than detecting D-amino acids in the active site. By recycling D-aminoacyl-tRNA to D-amino acids and free tRNA molecules, this enzyme counteracts the toxicity associated with the formation of D-aminoacyl-tRNA entities in vivo and helps enforce protein L-homochirality. This Sodalis glossinidius (strain morsitans) protein is D-aminoacyl-tRNA deacylase.